The primary structure comprises 135 residues: MTNEAYDNTTTLDPRIAQRLKHDDKGLVAAVIQQFDTKEVLMVGYMNDEAIRRTLTTGRVTFWSRSRQEYWRKGDTSGHAQYVKSFALDCDGDAILVEVDQVGAACHTGKRSCFEEGGQLPVVVGHRTKEQEGQR.

D89 provides a ligand contact to Mg(2+). C90 serves as a coordination point for Zn(2+). The Mg(2+) site is built by D91 and D93. The Zn(2+) site is built by C106 and C113.

Belongs to the PRA-CH family. As to quaternary structure, homodimer. Mg(2+) is required as a cofactor. Requires Zn(2+) as cofactor.

Its subcellular location is the cytoplasm. It catalyses the reaction 1-(5-phospho-beta-D-ribosyl)-5'-AMP + H2O = 1-(5-phospho-beta-D-ribosyl)-5-[(5-phospho-beta-D-ribosylamino)methylideneamino]imidazole-4-carboxamide. It functions in the pathway amino-acid biosynthesis; L-histidine biosynthesis; L-histidine from 5-phospho-alpha-D-ribose 1-diphosphate: step 3/9. In terms of biological role, catalyzes the hydrolysis of the adenine ring of phosphoribosyl-AMP. This is Phosphoribosyl-AMP cyclohydrolase from Bifidobacterium adolescentis (strain ATCC 15703 / DSM 20083 / NCTC 11814 / E194a).